The primary structure comprises 149 residues: Aquaporin-like protein 2 (149 aa).

Residues 1-35 (MSNESNDLEKNISHLDPTGVDNAYIPPEQPETKHS) are disordered. Over 1–47 (MSNESNDLEKNISHLDPTGVDNAYIPPEQPETKHSRFNIDRGTLRNH) the chain is Cytoplasmic. A helical membrane pass occupies residues 48-68 (FIAAVGEFCGTFMFLWCAYVI). Residues 69 to 89 (CNVANHDVALTTEPEGSHPGQ) are Extracellular-facing. A helical membrane pass occupies residues 90 to 110 (LIMIALGFGFSVMFSIWCFWW). Residues 111 to 149 (GFEPSRFSLFVFGQSHLTSQMCSDVVSSDHCWDGCWWCR) lie on the Cytoplasmic side of the membrane.

This sequence belongs to the MIP/aquaporin (TC 1.A.8) family.

It localises to the endoplasmic reticulum membrane. The protein localises to the cell membrane. Functionally, water channel required to facilitate the transport of water across membranes. Involved in freeze tolerance, osmotolerance and cell flocculation in liquid cultures. Is non-functional in most laboratory strains. The chain is Aquaporin-like protein 2 (AQY2-2) from Saccharomyces cerevisiae (strain Lalvin EC1118 / Prise de mousse) (Baker's yeast).